We begin with the raw amino-acid sequence, 62 residues long: Chromatin protein Cren7 (62 aa).

This sequence belongs to the Cren7 family. As to quaternary structure, monomer. Methylated at multiple sites, to varying extents.

The protein resides in the chromosome. It is found in the cytoplasm. In terms of biological role, a chromatin protein, binds double-stranded DNA without sequence specificity. Constrains negative DNA supercoils. This chain is Chromatin protein Cren7, found in Staphylothermus marinus (strain ATCC 43588 / DSM 3639 / JCM 9404 / F1).